The chain runs to 303 residues: Y-box-binding protein 1 (303 aa).

Residues methionine 1–proline 12 are compositionally biased toward polar residues. Positions methionine 1 to glycine 28 are disordered. The 65-residue stretch at glycine 39–valine 103 folds into the CSD domain. Positions tryptophan 43 to asparagine 48 are C5-methylcytosine binding. Residues alanine 98 to glutamate 303 form a disordered region. A compositionally biased stretch (basic residues) spans histidine 122 to proline 132. Low complexity-rich tracts occupy residues proline 133 to asparagine 143 and proline 173 to tyrosine 187. Basic residues-rich tracts occupy residues phenylalanine 220–proline 229 and arginine 258–arginine 270. A compositionally biased stretch (basic and acidic residues) spans proline 271 to alanine 284.

Belongs to the YBX1 family.

Its subcellular location is the cytoplasm. It localises to the nucleus. The protein localises to the cytoplasmic granule. The protein resides in the secreted. It is found in the extracellular exosome. Its subcellular location is the P-body. DNA- and RNA-binding protein involved in various processes, such as translational repression, RNA stabilization, mRNA splicing and transcription regulation. Binds preferentially to the 5'-[CU]CUGCG-3' RNA motif and specifically recognizes mRNA transcripts modified by C5-methylcytosine (m5C). Promotes mRNA stabilization: acts by binding to m5C-containing mRNAs and preventing mRNA decay. Plays a role in the maternal-to-zygotic transition in early embryo by binding to m5C-containing maternal mRNAs and preventing their degradation. Also promotes maternal-to-zygotic transition in oocytes and embryos by promoting translation repression; molecular mechanisms governing translation repression are unknown. Plays a key role in RNA composition of extracellular exosomes by defining the sorting of small non-coding RNAs, such as tRNAs, Y RNAs, Vault RNAs and miRNAs. Probably sorts RNAs in exosomes by recognizing and binding C5-methylcytosine (m5C)-containing RNAs. Acts as a key effector of epidermal progenitors by preventing epidermal progenitor senescence: acts by regulating the translation of a senescence-associated subset of cytokine mRNAs, possibly by binding to m5C-containing mRNAs. Also involved in pre-mRNA alternative splicing regulation: binds to splice sites in pre-mRNA and regulates splice site selection. Also able to bind DNA and regulate transcription. Binds to promoters that contain a Y-box (5'-CTGATTGGCCAA-3'). Promotes separation of DNA strands that contain mismatches or are modified by cisplatin. Has endonucleolytic activity and can introduce nicks or breaks into double-stranded DNA, suggesting a role in DNA repair. The secreted form acts as an extracellular mitogen and stimulates cell migration and proliferation. The sequence is that of Y-box-binding protein 1 from Xenopus laevis (African clawed frog).